Here is a 156-residue protein sequence, read N- to C-terminus: SsrA-binding protein (156 aa).

This sequence belongs to the SmpB family.

It is found in the cytoplasm. Its function is as follows. Required for rescue of stalled ribosomes mediated by trans-translation. Binds to transfer-messenger RNA (tmRNA), required for stable association of tmRNA with ribosomes. tmRNA and SmpB together mimic tRNA shape, replacing the anticodon stem-loop with SmpB. tmRNA is encoded by the ssrA gene; the 2 termini fold to resemble tRNA(Ala) and it encodes a 'tag peptide', a short internal open reading frame. During trans-translation Ala-aminoacylated tmRNA acts like a tRNA, entering the A-site of stalled ribosomes, displacing the stalled mRNA. The ribosome then switches to translate the ORF on the tmRNA; the nascent peptide is terminated with the 'tag peptide' encoded by the tmRNA and targeted for degradation. The ribosome is freed to recommence translation, which seems to be the essential function of trans-translation. The chain is SsrA-binding protein from Thermoanaerobacter pseudethanolicus (strain ATCC 33223 / 39E) (Clostridium thermohydrosulfuricum).